A 216-amino-acid polypeptide reads, in one-letter code: Probable succinyl-CoA:3-ketoacid coenzyme A transferase subunit B (216 aa).

Glutamate 47 is an active-site residue.

This sequence belongs to the 3-oxoacid CoA-transferase subunit B family. In terms of assembly, heterodimer of a subunit A and a subunit B.

It catalyses the reaction a 3-oxo acid + succinyl-CoA = a 3-oxoacyl-CoA + succinate. The sequence is that of Probable succinyl-CoA:3-ketoacid coenzyme A transferase subunit B (scoB) from Bacillus subtilis (strain 168).